A 346-amino-acid chain; its full sequence is MDLQKQLEELKISTQEKLKEMTGNHTKELQDLRVQVLGKKGSLTELLKGLKDLSNDLRPVVGKQVNEVRDILTKAFEEQAKVVEAAKIQAQLESESVDVTLPGRQMTLGHRHVLTQTSEEIEDIFLGMGFQVVDGFEVEKDYYNFERMNLPKDHPARDMQDTFYITEEILLRTHTSPVQARTMDQHDFSKGPLKMISPGRVFRRDTDDATHSHQFHQIEGLVVGENISMGDLKGTLQLISQKMFGAERKIRLRPSYFPFTEPSVEVDVSCFKCGGKGCNVCKQTGWIEILGAGMVHPSVLEMSGIDSEKYSGFAFGLGQERIAMLRYGINDIRGFYQGDVRFTDQF.

E261 serves as a coordination point for Mg(2+).

This sequence belongs to the class-II aminoacyl-tRNA synthetase family. Phe-tRNA synthetase alpha subunit type 1 subfamily. As to quaternary structure, tetramer of two alpha and two beta subunits. Mg(2+) serves as cofactor.

It localises to the cytoplasm. It carries out the reaction tRNA(Phe) + L-phenylalanine + ATP = L-phenylalanyl-tRNA(Phe) + AMP + diphosphate + H(+). The polypeptide is Phenylalanine--tRNA ligase alpha subunit (Streptococcus agalactiae serotype Ia (strain ATCC 27591 / A909 / CDC SS700)).